The sequence spans 148 residues: Snaclec 27 (148 aa).

The first 23 residues, 1–23 (WGDSSSSASACWSCFSLVSGIGA), serve as a signal peptide directing secretion. 3 disulfide bridges follow: Cys27–Cys38, Cys55–Cys144, and Cys121–Cys136. In terms of domain architecture, C-type lectin spans 34-145 (HEGHCYKVFS…CSSTQQFVCK (112 aa)).

The protein belongs to the snaclec family. In terms of assembly, heterodimer; disulfide-linked. In terms of tissue distribution, expressed by the venom gland.

The protein resides in the secreted. Interferes with one step of hemostasis (modulation of platelet aggregation, or coagulation cascade, for example). The polypeptide is Snaclec 27 (Echis ocellatus (Ocellated saw-scaled viper)).